We begin with the raw amino-acid sequence, 365 residues long: 4-hydroxy-tetrahydrodipicolinate synthase 1, chloroplastic (365 aa).

The N-terminal 39 residues, 1 to 39, are a transit peptide targeting the chloroplast; it reads MSALKNYGLISIDSALHFPRSNQLQSYKRRNAKWVSPIA. Pyruvate is bound at residue threonine 108. Tyrosine 194 serves as the catalytic Proton donor/acceptor. The Schiff-base intermediate with substrate role is filled by lysine 222. Pyruvate is bound at residue isoleucine 261.

It belongs to the DapA family.

The protein resides in the plastid. It localises to the chloroplast. The catalysed reaction is L-aspartate 4-semialdehyde + pyruvate = (2S,4S)-4-hydroxy-2,3,4,5-tetrahydrodipicolinate + H2O + H(+). The protein operates within amino-acid biosynthesis; L-lysine biosynthesis via DAP pathway; (S)-tetrahydrodipicolinate from L-aspartate: step 3/4. In terms of biological role, catalyzes the condensation of (S)-aspartate-beta-semialdehyde [(S)-ASA] and pyruvate to 4-hydroxy-tetrahydrodipicolinate (HTPA). This is 4-hydroxy-tetrahydrodipicolinate synthase 1, chloroplastic (DHDPS1) from Arabidopsis thaliana (Mouse-ear cress).